A 243-amino-acid chain; its full sequence is MTYSLRIADLPSNERPRERLIACGSQSLSTAELIAILLGTGQGKGKLSAVGLGQYILNQLSQYERDPLSILRNITVQELTQIHGIGTAKATTILAAIELGKRVFQSRPPELAVVESPQAAADALSQDLMWQTQEKFAVLLLDVKNRLLGTQVITIGTATETLAHPREIFGEVIRQGASRVIISHNHPSGNVEPSPEDINLTKQLLAGAQILDIPLLDHIIIGNGEHSSLRQITNLWEDYPQRG.

In terms of domain architecture, MPN spans 113–235 (VVESPQAAAD…HSSLRQITNL (123 aa)). Residues histidine 184, histidine 186, and aspartate 197 each contribute to the Zn(2+) site. The short motif at 184-197 (HNHPSGNVEPSPED) is the JAMM motif element.

Belongs to the UPF0758 family.

The protein is UPF0758 protein Tery_2667 of Trichodesmium erythraeum (strain IMS101).